The primary structure comprises 273 residues: 3-methyl-2-oxobutanoate hydroxymethyltransferase (273 aa).

The Mg(2+) site is built by D49 and D88. Residues 49-50 (DS), D88, and K118 contribute to the 3-methyl-2-oxobutanoate site. Residue E120 participates in Mg(2+) binding. E187 serves as the catalytic Proton acceptor.

The protein belongs to the PanB family. Homodecamer; pentamer of dimers. Requires Mg(2+) as cofactor.

The protein localises to the cytoplasm. The catalysed reaction is 3-methyl-2-oxobutanoate + (6R)-5,10-methylene-5,6,7,8-tetrahydrofolate + H2O = 2-dehydropantoate + (6S)-5,6,7,8-tetrahydrofolate. Its pathway is cofactor biosynthesis; (R)-pantothenate biosynthesis; (R)-pantoate from 3-methyl-2-oxobutanoate: step 1/2. Catalyzes the reversible reaction in which hydroxymethyl group from 5,10-methylenetetrahydrofolate is transferred onto alpha-ketoisovalerate to form ketopantoate. This is 3-methyl-2-oxobutanoate hydroxymethyltransferase from Rhizobium rhizogenes (strain K84 / ATCC BAA-868) (Agrobacterium radiobacter).